The sequence spans 693 residues: MAALGVQSINWQTAFNRQAHHTDKFSSQELILRRGQNFQVLMIMNKGLGSNERLEFIVSTGPYPSESAMTKAVFPLSNGSSGGWSAVLQASNGNTLTISISSPASAPIGRYTMALQIFSQGGISSVKLGTFILLFNPWLNVDSVFMGNHAEREEYVQEDAGIIFVGSTNRIGMIGWNFGQFEEDILSICLSILDRSLNFRRDAATDVASRNDPKYVGRVLSAMINSNDDNGVLAGNWSGTYTGGRDPRSWNGSVEILKNWKKSGFSPVRYGQCWVFAGTLNTALRSLGIPSRVITNFNSAHDTDRNLSVDVYYDPMGNPLDKGSDSVWNFHVWNEGWFVRSDLGPSYGGWQVLDATPQERSQGVFQCGPASVIGVREGDVQLNFDMPFIFAEVNADRITWLYDNTTGKQWKNSVNSHTIGRYISTKAVGSNARMDVTDKYKYPEGSDQERQVFQKALGKLKPNTPFAATSSMGLETEEQEPSIIGKLKVAGMLAVGKEVNLVLLLKNLSRDTKTVTVNMTAWTIIYNGTLVHEVWKDSATMSLDPEEEAEHPIKISYAQYEKYLKSDNMIRITAVCKVPDESEVVVERDIILDNPTLTLEVLNEARVRKPVNVQMLFSNPLDEPVRDCVLMVEGSGLLLGNLKIDVPTLGPKEGSRVRFDILPSRSGTKQLLADFSCNKFPAIKAMLSIDVAE.

Ala2 is subject to N-acetylalanine. The residue at position 111 (Tyr111) is a Phosphotyrosine. Position 112 is a phosphothreonine (Thr112). The Ca(2+) site is built by Ala222, Asn225, Asn227, Asp228, and Asn230. Cys273 is an active-site residue. Residues Asp302, Asp304, Asn306, Ser308, and Asp325 each coordinate Ca(2+). Catalysis depends on residues His331 and Asp354. Residues Asn394, Ser416, Glu444, and Glu449 each coordinate Ca(2+).

This sequence belongs to the transglutaminase superfamily. Transglutaminase family. As to quaternary structure, consists of two polypeptide chains, which are synthesized as a precursor form of a single polypeptide. Ca(2+) serves as cofactor. Post-translationally, activated by proteolytic processing. In vitro activation is commonly achieved by cleavage with dispase, a neutral bacterial protease. Dispase cleavage site was proposed to lie between Ser-470 and Ser-471 or between Pro-465 and Phe-466. Physiological activation may be catalyzed by CTSL and, to a lesser extent, by CTSS, but not by CTSB, CTSD nor CTSV.

The protein localises to the cytoplasm. It catalyses the reaction L-glutaminyl-[protein] + L-lysyl-[protein] = [protein]-L-lysyl-N(6)-5-L-glutamyl-[protein] + NH4(+). Catalyzes the calcium-dependent formation of isopeptide cross-links between glutamine and lysine residues in various proteins, as well as the conjugation of polyamines to proteins. Involved in the formation of the cornified envelope (CE), a specialized component consisting of covalent cross-links of proteins beneath the plasma membrane of terminally differentiated keratinocytes. Catalyzes small proline-rich proteins (SPRR1 and SPRR2) and LOR cross-linking to form small interchain oligomers, which are further cross-linked by TGM1 onto the growing CE scaffold. In hair follicles, involved in cross-linking structural proteins to hardening the inner root sheath. The protein is Protein-glutamine gamma-glutamyltransferase E (TGM3) of Homo sapiens (Human).